The primary structure comprises 517 residues: Golgi-associated kinase 1B (517 aa).

Residues 1–36 (MTCPDKPGQLVNWFVCSLCAPRVCKLWSSRRPRTRR) are Cytoplasmic-facing. The helical; Signal-anchor for type II membrane protein transmembrane segment at 37–56 (NLLLGTACAIYLGFLVSQVG) threads the bilayer. The Extracellular portion of the chain corresponds to 57–517 (RGSFQHGQAT…HGARVLPMNE (461 aa)). Residues asparagine 98 and asparagine 287 are each glycosylated (N-linked (GlcNAc...) asparagine).

Belongs to the GASK family.

It is found in the golgi apparatus membrane. The protein is Golgi-associated kinase 1B of Mus musculus (Mouse).